The following is a 455-amino-acid chain: Bleomycin hydrolase (455 aa).

Residues cysteine 73, histidine 372, and asparagine 396 contribute to the active site.

The protein belongs to the peptidase C1 family. In terms of assembly, homooctamer.

The protein localises to the cytoplasm. The catalysed reaction is Inactivates bleomycin B2 (a cytotoxic glycometallopeptide) by hydrolysis of a carboxyamide bond of beta-aminoalanine, but also shows general aminopeptidase activity. The specificity varies somewhat with source, but amino acid arylamides of Met, Leu and Ala are preferred.. Functionally, the normal physiological role of BLM hydrolase is unknown, but it catalyzes the inactivation of the antitumor drug BLM (a glycopeptide) by hydrolyzing the carboxamide bond of its B-aminoalaninamide moiety thus protecting normal and malignant cells from BLM toxicity. The sequence is that of Bleomycin hydrolase (BLMH) from Gallus gallus (Chicken).